Reading from the N-terminus, the 356-residue chain is S-adenosylmethionine:tRNA ribosyltransferase-isomerase (356 aa).

Belongs to the QueA family. Monomer.

The protein localises to the cytoplasm. The catalysed reaction is 7-aminomethyl-7-carbaguanosine(34) in tRNA + S-adenosyl-L-methionine = epoxyqueuosine(34) in tRNA + adenine + L-methionine + 2 H(+). It participates in tRNA modification; tRNA-queuosine biosynthesis. Transfers and isomerizes the ribose moiety from AdoMet to the 7-aminomethyl group of 7-deazaguanine (preQ1-tRNA) to give epoxyqueuosine (oQ-tRNA). The chain is S-adenosylmethionine:tRNA ribosyltransferase-isomerase from Xanthomonas oryzae pv. oryzae (strain KACC10331 / KXO85).